The chain runs to 295 residues: 33 kDa chaperonin (295 aa).

Intrachain disulfides connect Cys230–Cys232 and Cys264–Cys267.

Belongs to the HSP33 family. Post-translationally, under oxidizing conditions two disulfide bonds are formed involving the reactive cysteines. Under reducing conditions zinc is bound to the reactive cysteines and the protein is inactive.

It is found in the cytoplasm. In terms of biological role, redox regulated molecular chaperone. Protects both thermally unfolding and oxidatively damaged proteins from irreversible aggregation. Plays an important role in the bacterial defense system toward oxidative stress. The sequence is that of 33 kDa chaperonin from Ectopseudomonas mendocina (strain ymp) (Pseudomonas mendocina).